We begin with the raw amino-acid sequence, 188 residues long: Protein CRIPTO3 (188 aa).

One can recognise an EGF-like domain in the interval 78 to 107 (LNRTCCLNGGTCMLESFCACPPSFYGRNCE). The N-linked (GlcNAc...) asparagine glycan is linked to asparagine 79. 6 disulfide bridges follow: cysteine 82–cysteine 89, cysteine 83–cysteine 95, cysteine 97–cysteine 106, cysteine 115–cysteine 133, cysteine 128–cysteine 149, and cysteine 131–cysteine 140.

The protein belongs to the EGF-CFC (Cripto-1/FRL1/Cryptic) family. Expressed weakly in lung, colon and breast. Expressed also strongly in primary cancer tissues; lung and colon cancers.

The protein resides in the cell membrane. In terms of biological role, could play a role in the determination of the epiblastic cells that subsequently give rise to the mesoderm. Activates the Nodal-dependent signaling pathway. The chain is Protein CRIPTO3 from Homo sapiens (Human).